The sequence spans 160 residues: Allophycocyanin alpha chain (160 aa).

N70 is modified (N4-methylasparagine). C80 is a binding site for (2R,3E)-phycocyanobilin.

This sequence belongs to the phycobiliprotein family. In terms of assembly, component of the phycobilisome. Heterodimer of an alpha and a beta chain. Contains one covalently linked phycocyanobilin chromophore.

Its subcellular location is the cellular thylakoid membrane. In terms of biological role, light-harvesting photosynthetic bile pigment-protein from the phycobiliprotein complex. Allophycocyanin has a maximum absorption at approximately 650 nanometers. This chain is Allophycocyanin alpha chain (apcA), found in Anabaena cylindrica.